The chain runs to 461 residues: Secreted 45 kDa protein (461 aa).

An N-terminal signal peptide occupies residues 1–27; sequence MKKKIISAILMSTVILSAAAPLSGVYA. Positions 264–329 are enriched in low complexity; that stretch reads SSASASSSQA…GNTNSGTSTG (66 aa). The interval 264–343 is disordered; the sequence is SSASASSSQA…TTTGGSGINS (80 aa). A compositionally biased stretch (gly residues) spans 330–340; that stretch reads NTGGTTTGGSG. The region spanning 330–459 is the Peptidase C51 domain; that stretch reads NTGGTTTGGS…VSASGVTFLM (130 aa).

The protein is Secreted 45 kDa protein (usp45) of Lactococcus lactis subsp. cremoris (strain MG1363).